A 200-amino-acid polypeptide reads, in one-letter code: Probable GTP-binding protein EngB (200 aa).

Residues 25 to 199 (SGYEVAFAGR…ISLLDRWYEW (175 aa)) form the EngB-type G domain. Residues 33–40 (GRSNAGKS), 60–64 (GRTQL), 78–81 (DLPG), 145–148 (TKAD), and 178–180 (FSS) each bind GTP. Positions 40 and 62 each coordinate Mg(2+).

This sequence belongs to the TRAFAC class TrmE-Era-EngA-EngB-Septin-like GTPase superfamily. EngB GTPase family. Mg(2+) is required as a cofactor.

In terms of biological role, necessary for normal cell division and for the maintenance of normal septation. The polypeptide is Probable GTP-binding protein EngB (Legionella pneumophila (strain Corby)).